Consider the following 455-residue polypeptide: Pup--protein ligase (455 aa).

Glutamate 10 serves as a coordination point for Mg(2+). ATP is bound at residue arginine 55. Tyrosine 57 serves as a coordination point for Mg(2+). Aspartate 59 (proton acceptor) is an active-site residue. A Mg(2+)-binding site is contributed by glutamate 65. Residues threonine 68 and tryptophan 422 each coordinate ATP.

The protein belongs to the Pup ligase/Pup deamidase family. Pup-conjugating enzyme subfamily.

The enzyme catalyses ATP + [prokaryotic ubiquitin-like protein]-L-glutamate + [protein]-L-lysine = ADP + phosphate + N(6)-([prokaryotic ubiquitin-like protein]-gamma-L-glutamyl)-[protein]-L-lysine.. It participates in protein degradation; proteasomal Pup-dependent pathway. Its pathway is protein modification; protein pupylation. Catalyzes the covalent attachment of the prokaryotic ubiquitin-like protein modifier Pup to the proteasomal substrate proteins, thereby targeting them for proteasomal degradation. This tagging system is termed pupylation. The ligation reaction involves the side-chain carboxylate of the C-terminal glutamate of Pup and the side-chain amino group of a substrate lysine. This Sanguibacter keddieii (strain ATCC 51767 / DSM 10542 / NCFB 3025 / ST-74) protein is Pup--protein ligase.